A 540-amino-acid polypeptide reads, in one-letter code: MAVKYIFVTGGVLSSLGKGITSSSIATLLQQSGYSVSILKIDPYINVDPGTMSPLEHGEVFVTCDGAETDLDIGHYERFLNKDFHKKNNFTTGQIYMSVIENERKGKYLGKTIQIVPHIVDEIKSRIKFAGEGSDFLVVELGGTVGDIEGMPYLEAMRQMKHELGGKQVISIHITLIPLMRAAGELKTKPTQHSVQELRRIGISPQILVARCEKNLDKELKRKLALSCDVDNDSVIVAQDTQSIYKCPLNFLEEGILTPIARHLELGELKPKMDNWDMLVKKIIAPKSNITIGFVGKYLSLKESYKSLIESLIHAGANTDTRVNIKWIDSEILVDNLALLYDVDSLLIPGGFGERGIEGKLEAIKYARIQQIPLLGICLGMQLSLIEFARNVLGMSEANSIEFDPQTKEPVIYLIENFIDSQGGVQLRTHTSPMGGTMRLGEYECHIKKGTKLYEAYGKQTLIKERHRHRYEANPHYRALFEKNGMIVSGESNGLIESIELANHPWFVGVQFHPEFTSRLQNPNPVILAFVKETLAHKKT.

The tract at residues 1-266 is amidoligase domain; the sequence is MAVKYIFVTG…LTPIARHLEL (266 aa). Position 14 (Ser14) interacts with CTP. Ser14 contributes to the UTP binding site. ATP-binding positions include 15 to 20 and Asp72; that span reads SLGKGI. The Mg(2+) site is built by Asp72 and Glu140. Residues 147–149, 187–192, and Lys223 each bind CTP; these read DIE and KTKPTQ. UTP-binding positions include 187–192 and Lys223; that span reads KTKPTQ. The 250-residue stretch at 291-540 folds into the Glutamine amidotransferase type-1 domain; it reads TIGFVGKYLS…VKETLAHKKT (250 aa). Gly351 is an L-glutamine binding site. Cys378 functions as the Nucleophile; for glutamine hydrolysis in the catalytic mechanism. L-glutamine is bound by residues 379 to 382, Glu402, and Arg470; that span reads LGMQ. Active-site residues include His513 and Glu515.

This sequence belongs to the CTP synthase family. In terms of assembly, homotetramer.

It catalyses the reaction UTP + L-glutamine + ATP + H2O = CTP + L-glutamate + ADP + phosphate + 2 H(+). The catalysed reaction is L-glutamine + H2O = L-glutamate + NH4(+). It carries out the reaction UTP + NH4(+) + ATP = CTP + ADP + phosphate + 2 H(+). It participates in pyrimidine metabolism; CTP biosynthesis via de novo pathway; CTP from UDP: step 2/2. With respect to regulation, allosterically activated by GTP, when glutamine is the substrate; GTP has no effect on the reaction when ammonia is the substrate. The allosteric effector GTP functions by stabilizing the protein conformation that binds the tetrahedral intermediate(s) formed during glutamine hydrolysis. Inhibited by the product CTP, via allosteric rather than competitive inhibition. Functionally, catalyzes the ATP-dependent amination of UTP to CTP with either L-glutamine or ammonia as the source of nitrogen. Regulates intracellular CTP levels through interactions with the four ribonucleotide triphosphates. The polypeptide is CTP synthase (Helicobacter hepaticus (strain ATCC 51449 / 3B1)).